The chain runs to 139 residues: AP-4 complex subunit sigma (139 aa).

Belongs to the adaptor complexes small subunit family. May be part of the adaptor protein complex 4 (AP-4), a heterotetramer composed of two large adaptins (epsilon-type subunitand beta-type subunit), a medium adaptin (mu-type subunit) and a small adaptin (sigma-type).

The protein resides in the golgi apparatus. It is found in the trans-Golgi network membrane. Functionally, probable component of an adaptor protein complex. Adaptor protein complexes are vesicle coat components involved both in vesicle formation and cargo selection. They control the vesicular transport of proteins in different trafficking pathways. The polypeptide is AP-4 complex subunit sigma (Dictyostelium discoideum (Social amoeba)).